A 235-amino-acid polypeptide reads, in one-letter code: Glucosamine-6-phosphate deaminase (235 aa).

Residue D62 is the Proton acceptor; for enolization step of the active site. N128 serves as the catalytic For ring-opening step. H130 functions as the Proton acceptor; for ring-opening step in the catalytic mechanism. E135 (for ring-opening step) is an active-site residue.

It belongs to the glucosamine/galactosamine-6-phosphate isomerase family. NagB subfamily.

The catalysed reaction is alpha-D-glucosamine 6-phosphate + H2O = beta-D-fructose 6-phosphate + NH4(+). It functions in the pathway amino-sugar metabolism; N-acetylneuraminate degradation; D-fructose 6-phosphate from N-acetylneuraminate: step 5/5. Functionally, catalyzes the reversible isomerization-deamination of glucosamine 6-phosphate (GlcN6P) to form fructose 6-phosphate (Fru6P) and ammonium ion. In Streptococcus pneumoniae serotype 2 (strain D39 / NCTC 7466), this protein is Glucosamine-6-phosphate deaminase.